Here is a 201-residue protein sequence, read N- to C-terminus: Small ribosomal subunit protein uS4B (201 aa).

Positions 93 to 156 (QRLDTVVYRL…RSLAVVRESL (64 aa)) constitute an S4 RNA-binding domain.

It belongs to the universal ribosomal protein uS4 family. Part of the 30S ribosomal subunit. Contacts protein S5. The interaction surface between S4 and S5 is involved in control of translational fidelity.

Its function is as follows. One of the primary rRNA binding proteins, it binds directly to 16S rRNA where it nucleates assembly of the body of the 30S subunit. In terms of biological role, with S5 and S12 plays an important role in translational accuracy. This chain is Small ribosomal subunit protein uS4B, found in Symbiobacterium thermophilum (strain DSM 24528 / JCM 14929 / IAM 14863 / T).